Here is a 313-residue protein sequence, read N- to C-terminus: Ribosomal RNA small subunit methyltransferase H (313 aa).

Residues 35–37 (GGH), D55, F79, D100, and Q107 contribute to the S-adenosyl-L-methionine site.

The protein belongs to the methyltransferase superfamily. RsmH family.

It is found in the cytoplasm. It catalyses the reaction cytidine(1402) in 16S rRNA + S-adenosyl-L-methionine = N(4)-methylcytidine(1402) in 16S rRNA + S-adenosyl-L-homocysteine + H(+). Functionally, specifically methylates the N4 position of cytidine in position 1402 (C1402) of 16S rRNA. This Burkholderia pseudomallei (strain K96243) protein is Ribosomal RNA small subunit methyltransferase H.